A 944-amino-acid polypeptide reads, in one-letter code: Envelope glycoprotein B (944 aa).

2 disordered regions span residues 1-37 (MGPP…RPGS) and 68-108 (TDGG…RVTG). An N-terminal signal peptide occupies residues 1–55 (MGPPPPLRRQRLLLPRPSRRRPPARLASGRRSSRPGSSWTWYATLIASLVWYPTV). A compositionally biased stretch (low complexity) spans 24 to 37 (ARLASGRRSSRPGS). The Virion surface segment spans residues 56-785 (SSTTLEATVV…GGFVSFFTNP (730 aa)). Residues 71–85 (GATGQASGGGGGGAG) show a composition bias toward gly residues. The span at 89–99 (PSESPETSADT) shows a compositional bias: polar residues. N-linked (GlcNAc...) asparagine; by host glycosylation occurs at N114. Intrachain disulfides connect C125-C577, C142-C533, C215-C280, C372-C420, and C608-C645. An involved in fusion and/or binding to host membrane region spans residues 182 to 188 (SYAYIYT). N238 is a glycosylation site (N-linked (GlcNAc...) asparagine; by host). The tract at residues 267-274 (GSTWLYKE) is involved in fusion and/or binding to host membrane. N-linked (GlcNAc...) asparagine; by host glycosylation is found at N369, N409, N414, N426, N481, N485, and N620. Hydrophobic membrane proximal region regions lie at residues 731-783 (ITSK…SFFT) and 762-782 (LVLG…VSFF). Residues 786 to 806 (FGSLTLIILVVAVVVIVFLLY) form a helical membrane-spanning segment. The Intravirion segment spans residues 807–944 (QRQRSAVRQP…RDTGSDSELA (138 aa)). Disordered stretches follow at residues 834–878 (TVTT…SATA) and 902–944 (REVP…SELA). The Internalization motif signature appears at 931–934 (YRRL).

Belongs to the herpesviridae glycoprotein B family. In terms of assembly, homotrimer; disulfide-linked. Binds to heparan sulfate proteoglycans. Interacts with gH/gL heterodimer. In terms of processing, a proteolytic cleavage by host furin generates two subunits that remain linked by disulfide bonds.

The protein localises to the virion membrane. It localises to the host cell membrane. It is found in the host endosome membrane. The protein resides in the host Golgi apparatus membrane. Its function is as follows. Envelope glycoprotein that forms spikes at the surface of virion envelope. Essential for the initial attachment to heparan sulfate moieties of the host cell surface proteoglycans. Involved in fusion of viral and cellular membranes leading to virus entry into the host cell. Following initial binding to its host receptors, membrane fusion is mediated by the fusion machinery composed at least of gB and the heterodimer gH/gL. May be involved in the fusion between the virion envelope and the outer nuclear membrane during virion egress. This is Envelope glycoprotein B from Tupaiid herpesvirus (strain 2) (TuHV-2).